A 501-amino-acid chain; its full sequence is Cytochrome P450 71B25 (501 aa).

Residues 1 to 21 traverse the membrane as a helical segment; sequence MAILQSFLLLLSLPFLFTLIY. Position 445 (Cys-445) interacts with heme.

The protein belongs to the cytochrome P450 family. Heme serves as cofactor.

It localises to the membrane. The chain is Cytochrome P450 71B25 (CYP71B25) from Arabidopsis thaliana (Mouse-ear cress).